The sequence spans 368 residues: F-box protein At3g17710 (368 aa).

The 46-residue stretch at 1–46 (MASVKLPWDLEEEILSRLPPRSLVRFRTVCKHWNGLFSDKRFVKKH) folds into the F-box domain.

This Arabidopsis thaliana (Mouse-ear cress) protein is F-box protein At3g17710.